A 2057-amino-acid polypeptide reads, in one-letter code: Rho guanine nucleotide exchange factor 17 (2057 aa).

Disordered regions lie at residues 20–361 (ERWS…DTGG), 375–461 (LASP…SNPD), and 481–559 (RVRK…LKPS). Ser142 and Ser152 each carry phosphoserine. Over residues 227 to 249 (ARASSSSSIASSYPVSRSRAASS) the composition is skewed to low complexity. A phosphoserine mark is found at Ser305 and Ser308. Over residues 314 to 323 (GGLGSAGGVG) the composition is skewed to gly residues. 7 positions are modified to phosphoserine: Ser324, Ser330, Ser377, Ser381, Ser389, Ser404, and Ser414. Over residues 382–391 (RGSSRYSSTE) the composition is skewed to polar residues. Residues 440-451 (PLRDGGLDLDKN) show a composition bias toward basic and acidic residues. Ser456 is subject to Phosphoserine. Over residues 507-524 (EQSESTLSQSPTSPTTRP) the composition is skewed to low complexity. Residues Ser538 and Ser611 each carry the phosphoserine modification. Disordered stretches follow at residues 615–647 (AGDM…PEPL) and 663–952 (LSST…VRHA). Polar residues predominate over residues 663–672 (LSSTSAQTNH). The residue at position 689 (Ser689) is a Phosphoserine. Phosphothreonine is present on residues Thr692 and Thr695. Residues 710 to 719 (PNGTELSNGE) are compositionally biased toward polar residues. At Ser728 the chain carries Phosphoserine. Residues 747–760 (SVDSNLLGSLNSKT) are compositionally biased toward polar residues. The segment covering 820–829 (SLSDPSRRGE) has biased composition (basic and acidic residues). At Ser906 the chain carries Phosphoserine. Basic residues predominate over residues 909-920 (LTRRGSKKRPAR). Basic and acidic residues predominate over residues 922-931 (SHQELRREEG). The segment covering 933 to 944 (QDQTGSLTQTRS) has biased composition (polar residues). 2 positions are modified to phosphoserine: Ser953 and Ser994. The span at 1015 to 1027 (GPVDLPCLPPSAP) shows a compositional bias: pro residues. A disordered region spans residues 1015 to 1054 (GPVDLPCLPPSAPPSTETKPSGAARATPDEPAPASKCCSK). The DH domain occupies 1059 to 1247 (MRKHVTMTLL…KQVAERINKG (189 aa)). The residue at position 1324 (Ser1324) is a Phosphoserine. Disordered stretches follow at residues 1555–1713 (RCPR…SSRG) and 1983–2050 (CSTP…DSTN). Residues 1579-1589 (LDVEATAEEEA) are compositionally biased toward acidic residues. Residues 1638–1674 (SPSPSGTLQSQASQSTISSSFGNEETPSSKEATAETT) are compositionally biased toward low complexity.

Functionally, acts as a guanine nucleotide exchange factor (GEF) for RhoA GTPases. The chain is Rho guanine nucleotide exchange factor 17 (Arhgef17) from Mus musculus (Mouse).